The following is a 1380-amino-acid chain: DNA-directed RNA polymerase subunit beta (1380 aa).

This sequence belongs to the RNA polymerase beta chain family. The RNAP catalytic core consists of 2 alpha, 1 beta, 1 beta' and 1 omega subunit. When a sigma factor is associated with the core the holoenzyme is formed, which can initiate transcription.

The enzyme catalyses RNA(n) + a ribonucleoside 5'-triphosphate = RNA(n+1) + diphosphate. In terms of biological role, DNA-dependent RNA polymerase catalyzes the transcription of DNA into RNA using the four ribonucleoside triphosphates as substrates. The polypeptide is DNA-directed RNA polymerase subunit beta (Nitrobacter winogradskyi (strain ATCC 25391 / DSM 10237 / CIP 104748 / NCIMB 11846 / Nb-255)).